Reading from the N-terminus, the 345-residue chain is Tropomodulin-4 (345 aa).

Disordered stretches follow at residues 40–64 (PENM…GPLD) and 326–345 (ARAA…QKKR). A compositionally biased stretch (basic and acidic residues) spans 336-345 (NELRRQQKKR).

This sequence belongs to the tropomodulin family. In terms of assembly, binds to the N-terminus of tropomyosin and to actin.

The protein resides in the cytoplasm. The protein localises to the cytoskeleton. Its function is as follows. Blocks the elongation and depolymerization of the actin filaments at the pointed end. The Tmod/TM complex contributes to the formation of the short actin protofilament, which in turn defines the geometry of the membrane skeleton. The sequence is that of Tropomodulin-4 (Tmod4) from Mus musculus (Mouse).